Reading from the N-terminus, the 257-residue chain is Imidazole glycerol phosphate synthase subunit HisF (257 aa).

Residues D11 and D130 contribute to the active site.

The protein belongs to the HisA/HisF family. In terms of assembly, heterodimer of HisH and HisF.

It localises to the cytoplasm. It carries out the reaction 5-[(5-phospho-1-deoxy-D-ribulos-1-ylimino)methylamino]-1-(5-phospho-beta-D-ribosyl)imidazole-4-carboxamide + L-glutamine = D-erythro-1-(imidazol-4-yl)glycerol 3-phosphate + 5-amino-1-(5-phospho-beta-D-ribosyl)imidazole-4-carboxamide + L-glutamate + H(+). It functions in the pathway amino-acid biosynthesis; L-histidine biosynthesis; L-histidine from 5-phospho-alpha-D-ribose 1-diphosphate: step 5/9. IGPS catalyzes the conversion of PRFAR and glutamine to IGP, AICAR and glutamate. The HisF subunit catalyzes the cyclization activity that produces IGP and AICAR from PRFAR using the ammonia provided by the HisH subunit. The protein is Imidazole glycerol phosphate synthase subunit HisF of Shewanella loihica (strain ATCC BAA-1088 / PV-4).